Here is a 512-residue protein sequence, read N- to C-terminus: MLLSRLAHVSREVAATSARSRKIALLAELFRDADADDVPIVIPYLAGRLPQGRLGIGWKLLGRPVTPASEPSLTVRDVDARLTAVGAVTGTGSQAGRGRLMGELMAAATDVEQAFLRGLLTGEVRQGALDAVAVEGLAEATGAPPADVRRAVMLAGSLQTVARALLAEGPGALDGFRLTVGRPVLPMLAHTAGSVAEAVGKLGACAVEEKLDGIRVQLHRDGDHVRIYTRTLDDITDRLPELTAAALELKGDRFILDGEVIALDGNGRPRSFQEIAGRVGSRVDVAAAAASVPVSPVFFDALSVDGRDLLDLPFTERHAELARLVPEPLRVRRALVSGPDDGAAAETFLADTLARGHEGVVVKALDAPYSAGRRGASWLKVKPVHTLDLVVLAAEWGHGRRTGKLSNLHLGARAADGSFAMLGKTFKGMTDAMLTWQTERLTELAVEENGSVVTVRPELVVEIAYDGLQKSTRYPAGVTLRFARVVRYREDKTPAEADTVETLLAAHPEVTR.

An ATP-binding site is contributed by Glu208. Lys210 acts as the N6-AMP-lysine intermediate in catalysis. Residues Arg215, Arg230, Glu259, Phe299, Arg374, and Lys380 each coordinate ATP.

It belongs to the ATP-dependent DNA ligase family. It depends on Mg(2+) as a cofactor.

It carries out the reaction ATP + (deoxyribonucleotide)n-3'-hydroxyl + 5'-phospho-(deoxyribonucleotide)m = (deoxyribonucleotide)n+m + AMP + diphosphate.. Its function is as follows. DNA ligase that seals nicks in double-stranded DNA during DNA replication, DNA recombination and DNA repair. The chain is Probable DNA ligase from Streptomyces avermitilis (strain ATCC 31267 / DSM 46492 / JCM 5070 / NBRC 14893 / NCIMB 12804 / NRRL 8165 / MA-4680).